A 139-amino-acid polypeptide reads, in one-letter code: MRHGKVHRKFNRTAEHRKAMFANLAGALITHEQIVTTLPKAKDLRPVVEKLVTLARRGDLHARRQAIAELRDLNVVKKLFDVLAKRYEGRPGGYTRIIKAGFRYGDSTPVAVIEFVDRDVDAKGAADRARAEAAEAVAA.

It belongs to the bacterial ribosomal protein bL17 family. As to quaternary structure, part of the 50S ribosomal subunit. Contacts protein L32.

The chain is Large ribosomal subunit protein bL17 from Azorhizobium caulinodans (strain ATCC 43989 / DSM 5975 / JCM 20966 / LMG 6465 / NBRC 14845 / NCIMB 13405 / ORS 571).